Reading from the N-terminus, the 601-residue chain is Elongation factor 4 (601 aa).

One can recognise a tr-type G domain in the interval 7–189; sequence SHIRNFSIIA…SIVQLVPPPQ (183 aa). GTP contacts are provided by residues 19-24 and 136-139; these read DHGKST and NKID.

It belongs to the TRAFAC class translation factor GTPase superfamily. Classic translation factor GTPase family. LepA subfamily.

It is found in the cell inner membrane. It catalyses the reaction GTP + H2O = GDP + phosphate + H(+). Its function is as follows. Required for accurate and efficient protein synthesis under certain stress conditions. May act as a fidelity factor of the translation reaction, by catalyzing a one-codon backward translocation of tRNAs on improperly translocated ribosomes. Back-translocation proceeds from a post-translocation (POST) complex to a pre-translocation (PRE) complex, thus giving elongation factor G a second chance to translocate the tRNAs correctly. Binds to ribosomes in a GTP-dependent manner. This is Elongation factor 4 from Trichodesmium erythraeum (strain IMS101).